The primary structure comprises 163 residues: Neurotrophin-3 (163 aa).

Positions 1 to 3 (IQS) are cleaved as a signal peptide. The propeptide occupies 4 to 119 (TSMDQGILTE…VLNRTSRRKR (116 aa)). N-linked (GlcNAc...) asparagine glycosylation is present at Asn-112.

It belongs to the NGF-beta family.

It is found in the secreted. In terms of biological role, seems to promote the survival of visceral and proprioceptive sensory neurons. The sequence is that of Neurotrophin-3 (NTF3) from Eryx conicus (Rough-scaled sand boa).